We begin with the raw amino-acid sequence, 267 residues long: L-aspartate dehydrogenase (267 aa).

Positions 124 and 190 each coordinate NAD(+). His218 is an active-site residue.

Belongs to the L-aspartate dehydrogenase family.

The enzyme catalyses L-aspartate + NADP(+) + H2O = oxaloacetate + NH4(+) + NADPH + H(+). It carries out the reaction L-aspartate + NAD(+) + H2O = oxaloacetate + NH4(+) + NADH + H(+). It participates in cofactor biosynthesis; NAD(+) biosynthesis; iminoaspartate from L-aspartate (dehydrogenase route): step 1/1. Its function is as follows. Specifically catalyzes the NAD or NADP-dependent dehydrogenation of L-aspartate to iminoaspartate. The sequence is that of L-aspartate dehydrogenase from Methanococcus maripaludis (strain C7 / ATCC BAA-1331).